We begin with the raw amino-acid sequence, 331 residues long: UPF0324 membrane protein SAS0317 (331 aa).

A run of 11 helical transmembrane segments spans residues 9-26 (FMIG…SFLA), 31-48 (ILDK…AILY), 69-88 (LLRF…DIIG), 93-115 (LLAI…NKLL), 122-144 (ALLL…APIF), 154-176 (SIGI…YAIF), 183-202 (YGAW…LAGG), 217-234 (LGRV…ILIM), 247-269 (ISIP…VTIP), 273-295 (LNIL…GLNV), and 308-330 (LMTI…HWLY).

Belongs to the UPF0324 family.

The protein resides in the cell membrane. The chain is UPF0324 membrane protein SAS0317 from Staphylococcus aureus (strain MSSA476).